A 204-amino-acid polypeptide reads, in one-letter code: Somatotropin (204 aa).

Residues 1-17 (MDRVVLMLSVLSLGVSS) form the signal peptide. Q18 bears the Pyrrolidone carboxylic acid mark. Residue H36 participates in Zn(2+) binding. C69 and C177 form a disulfide bridge. A Zn(2+)-binding site is contributed by E186. Cysteines 194 and 202 form a disulfide.

The protein belongs to the somatotropin/prolactin family.

It localises to the secreted. Growth hormone plays an important role in growth control and is involved in the regulation of several anabolic processes. Implicated as an osmoregulatory substance important for seawater adaptation. In Acanthopagrus butcheri (Australian black bream), this protein is Somatotropin (gh).